The following is a 158-amino-acid chain: METIYDFVVETNKGVTYKLDAYKGDVMLIVNTASECGFTSQFEGLQSLYEKYKDQGFVILGFPCNQFGGQEPGSGEEAAQNCKLNYGVTFPMHQKIDVKGEHQLPLFRYLTAAQHGFFNEKIKWNFTKFLVDREGNVVKRFAPQKKPVQIEREIEKLL.

The active site involves cysteine 36.

This sequence belongs to the glutathione peroxidase family.

This is Glutathione peroxidase homolog BsaA (bsaA) from Staphylococcus aureus (strain COL).